Consider the following 734-residue polypeptide: Photosystem I P700 chlorophyll a apoprotein A2 (734 aa).

Transmembrane regions (helical) follow at residues 46-69 (IFAS…FHVA), 135-158 (LYTG…LHLQ), 175-199 (LNHH…HVAI), 273-291 (IAHH…GHMY), 330-353 (LHFQ…QHMY), 369-395 (AALY…IFFI), 417-439 (AIIS…LYVH), and 517-535 (FLVH…LILV). 2 residues coordinate [4Fe-4S] cluster: cysteine 559 and cysteine 568. The next 2 helical transmembrane spans lie at 575-596 (AFYL…YWHW) and 643-665 (LSVW…MFLI). Residues histidine 654, methionine 662, and tyrosine 670 each coordinate chlorophyll a. Tryptophan 671 provides a ligand contact to phylloquinone. The chain crosses the membrane as a helical span at residues 707 to 727 (LVGLAHFSVGYIFTYAAFLIA).

It belongs to the PsaA/PsaB family. In terms of assembly, the PsaA/B heterodimer binds the P700 chlorophyll special pair and subsequent electron acceptors. PSI consists of a core antenna complex that captures photons, and an electron transfer chain that converts photonic excitation into a charge separation. The eukaryotic PSI reaction center is composed of at least 11 subunits. P700 is a chlorophyll a/chlorophyll a' dimer, A0 is one or more chlorophyll a, A1 is one or both phylloquinones and FX is a shared 4Fe-4S iron-sulfur center. serves as cofactor.

It is found in the plastid. The protein localises to the chloroplast thylakoid membrane. It catalyses the reaction reduced [plastocyanin] + hnu + oxidized [2Fe-2S]-[ferredoxin] = oxidized [plastocyanin] + reduced [2Fe-2S]-[ferredoxin]. Functionally, psaA and PsaB bind P700, the primary electron donor of photosystem I (PSI), as well as the electron acceptors A0, A1 and FX. PSI is a plastocyanin-ferredoxin oxidoreductase, converting photonic excitation into a charge separation, which transfers an electron from the donor P700 chlorophyll pair to the spectroscopically characterized acceptors A0, A1, FX, FA and FB in turn. Oxidized P700 is reduced on the lumenal side of the thylakoid membrane by plastocyanin. This chain is Photosystem I P700 chlorophyll a apoprotein A2, found in Piper cenocladum (Ant piper).